The following is a 342-amino-acid chain: Spore photoproduct lyase (342 aa).

In terms of domain architecture, Radical SAM core spans 77 to 305 (SKPSAEYAIP…EEKRRYKWGR (229 aa)). [4Fe-4S] cluster-binding residues include Cys-91, Cys-95, and Cys-98. The H-T-H motif DNA-binding region spans 218–235 (EAAVKVAKAGYPLGFIVA).

This sequence belongs to the radical SAM superfamily. SPL family. Monomer or homodimer. The cofactor is [4Fe-4S] cluster. S-adenosyl-L-methionine is required as a cofactor.

It catalyses the reaction (5R)-5,6-dihydro-5-(thymidin-7-yl)thymidine in DNA = a thymidine dimer in DNA. Its function is as follows. Involved in repair of UV radiation-induced DNA damage during spore germination. Can repair thymine dimer 5-thyminyl-5,6-dihydrothymine (known as spore photoproduct (SP)) by in situ monomerization of SP to two thymines. This Bacillus subtilis (strain 168) protein is Spore photoproduct lyase (splB).